The sequence spans 192 residues: E3 ubiquitin-protein ligase RNF183 (192 aa).

Residues 1 to 161 are Cytoplasmic-facing; that stretch reads MAEQQGRELE…RECFRNPQFR (161 aa). An RING-type zinc finger spans residues 13–60; that stretch reads CPVCWNPFNNTFHTPKMLDCCHSFCVECLAHLSLVTPARRRLLCPLCR. A helical; Anchor for type IV membrane protein transmembrane segment spans residues 162 to 182; the sequence is IFAYLMAVILSVTLLLIFSIF. The Lumenal segment spans residues 183 to 192; sequence WTKQFLWGVG.

In terms of assembly, interacts with FATE1. Interacts with SEC16A. Interacts with BCL2L1. Autoubiquitinated (in vitro). In terms of tissue distribution, kidney and testis.

The protein localises to the endoplasmic reticulum membrane. It localises to the endoplasmic reticulum. The protein resides in the golgi apparatus. It is found in the cis-Golgi network membrane. Its subcellular location is the lysosome membrane. It carries out the reaction S-ubiquitinyl-[E2 ubiquitin-conjugating enzyme]-L-cysteine + [acceptor protein]-L-lysine = [E2 ubiquitin-conjugating enzyme]-L-cysteine + N(6)-ubiquitinyl-[acceptor protein]-L-lysine.. The protein operates within protein modification; protein ubiquitination. In terms of biological role, acts as an E3 ubiquitin ligase catalyzing the covalent attachment of ubiquitin moieties onto substrate proteins. Triggers apoptosis in response to prolonged ER stress by mediating the polyubiquitination and subsequent proteasomal degradation of BCL2L1. May collaborate with FATE1 to restrain BIK protein levels thus regulating apoptotic signaling. In Homo sapiens (Human), this protein is E3 ubiquitin-protein ligase RNF183 (RNF183).